Consider the following 126-residue polypeptide: Chemocyanin (126 aa).

Positions 1 to 30 (MAQGSGSAERALVLGVVLVFLVFNCEVAES) are cleaved as a signal peptide. One can recognise a Phytocyanin domain in the interval 31–126 (VVYTVGDGGG…GGLKIAVTAA (96 aa)). Positions 69, 109, and 114 each coordinate Cu cation. The cysteines at positions 82 and 115 are disulfide-linked.

As to expression, strongly expressed in stigma and style and to a lesser extent in leaves, ovary and petals. Not detected in pollen tubes, mature anthers or roots.

In terms of biological role, diffusible chemotropic factor that induces pollen tube chemotropism. The chain is Chemocyanin from Lilium longiflorum (Trumpet lily).